A 160-amino-acid chain; its full sequence is Major allergen Pru av 1 (160 aa).

This sequence belongs to the BetVI family.

The chain is Major allergen Pru av 1 (PRUA1) from Prunus avium (Cherry).